Here is a 73-residue protein sequence, read N- to C-terminus: UPF0435 protein OB1527 (73 aa).

Belongs to the UPF0435 family.

The protein is UPF0435 protein OB1527 of Oceanobacillus iheyensis (strain DSM 14371 / CIP 107618 / JCM 11309 / KCTC 3954 / HTE831).